The sequence spans 445 residues: Phosphoglucosamine mutase 1 (445 aa).

Ser102 acts as the Phosphoserine intermediate in catalysis. Residues Ser102, Asp241, Asp243, and Asp245 each coordinate Mg(2+). At Ser102 the chain carries Phosphoserine.

The protein belongs to the phosphohexose mutase family. Mg(2+) serves as cofactor. In terms of processing, activated by phosphorylation.

The catalysed reaction is alpha-D-glucosamine 1-phosphate = D-glucosamine 6-phosphate. Its function is as follows. Catalyzes the conversion of glucosamine-6-phosphate to glucosamine-1-phosphate. This chain is Phosphoglucosamine mutase 1, found in Shewanella baltica (strain OS185).